The chain runs to 1141 residues: Translocase of chloroplast 125, chloroplastic (1141 aa).

2 disordered regions span residues 1–177 and 325–431; these read MDAL…ISGY and GFVE…EANE. Composition is skewed to basic and acidic residues over residues 57–72 and 107–121; these read RVPE…KRDG and IDGR…REDL. Positions 132 to 150 are enriched in acidic residues; sequence YDDDDDDEEEEEDGSEEGE. The span at 151-167 shows a compositional bias: low complexity; that stretch reads STSSSIINSEYSSSASN. Residues 328–353 show a composition bias toward acidic residues; it reads EAEEAESDVFTEGEDGYDDEDEDGDI. Low complexity-rich tracts occupy residues 389–401 and 408–429; these read RSSA…TTAT and TASS…SSEA. Residues 505–734 form the AIG1-type G domain; that stretch reads DFACTILVLG…KLQEASTPGK (230 aa). The G1 stretch occupies residues 514–521; it reads GKTGVGKS. 517–522 serves as a coordination point for GTP; it reads GVGKSA. Ser521 contacts Mg(2+). Positions 541–545 are G2; that stretch reads STTKV. The interval 561–564 is G3; sequence DTPG. A G4 region spans residues 633–636; the sequence is THAS. Residues His634 and 682-683 each bind GTP; that span reads EN. The interval 682 to 684 is G5; sequence ENH. Disordered stretches follow at residues 758 to 795 and 832 to 871; these read QLKM…PFRP and IRRR…AVPM. Over residues 770–789 the composition is skewed to acidic residues; that stretch reads EDSDDDSDEEDEEEGDEYDD. Basic residues predominate over residues 832-841; the sequence is IRRRRERKKQ. The chain crosses the membrane as a helical span at residues 1116–1136; it reads MVLIGIVPILRSLINCRFGFG.

The protein belongs to the TRAFAC class TrmE-Era-EngA-EngB-Septin-like GTPase superfamily. AIG1/Toc34/Toc159-like paraseptin GTPase family. TOC159 subfamily. Part of the TOC core complex. The cofactor is Mg(2+).

Its subcellular location is the plastid. It is found in the chloroplast outer membrane. GTPase involved in protein precursor import into chloroplasts. Seems to recognize chloroplast-destined precursor proteins and regulate their presentation to the translocation channel through GTP hydrolysis. Probably specialized in the import of nuclear encoded non-photosynthetic preproteins from the cytoplasm to the chloroplast. The polypeptide is Translocase of chloroplast 125, chloroplastic (Physcomitrium patens (Spreading-leaved earth moss)).